A 105-amino-acid polypeptide reads, in one-letter code: Small ribosomal subunit protein uS10 (105 aa).

It belongs to the universal ribosomal protein uS10 family. In terms of assembly, part of the 30S ribosomal subunit.

Functionally, involved in the binding of tRNA to the ribosomes. This chain is Small ribosomal subunit protein uS10, found in Oleidesulfovibrio alaskensis (strain ATCC BAA-1058 / DSM 17464 / G20) (Desulfovibrio alaskensis).